A 24-amino-acid chain; its full sequence is GVTSNPAIFQKAISTSNAYNDQFR.

The protein belongs to the transaldolase family.

It is found in the cytoplasm. It catalyses the reaction D-sedoheptulose 7-phosphate + D-glyceraldehyde 3-phosphate = D-erythrose 4-phosphate + beta-D-fructose 6-phosphate. It participates in carbohydrate degradation; pentose phosphate pathway; D-glyceraldehyde 3-phosphate and beta-D-fructose 6-phosphate from D-ribose 5-phosphate and D-xylulose 5-phosphate (non-oxidative stage): step 2/3. Transaldolase is important for the balance of metabolites in the pentose-phosphate pathway. The protein is Transaldolase of Capsicum annuum var. annuum (Red pepper).